We begin with the raw amino-acid sequence, 486 residues long: Probable FAD-binding monooxygenase ltbD (486 aa).

The tract at residues 186–243 (PAGDGGTNDQGPSRAQSTASSGGSGRPRSTESPQSGAQASTTPTSPPTTQSTGDDPAA) is disordered. Over residues 194–206 (DQGPSRAQSTASS) the composition is skewed to polar residues. Residues 220 to 241 (SGAQASTTPTSPPTTQSTGDDP) are compositionally biased toward low complexity.

The protein belongs to the FAD-binding monooxygenase family. As to quaternary structure, homodimer. It depends on FAD as a cofactor.

Probable FAD-binding monooxygenase; part of the gene cluster that mediates the biosynthesis of luteodienoside A, a glycosylated polyketide consisting of an unusual 1-O-beta-D-glucopyranosyl-myo-inositol (glucinol) ester of 3-hydroxy-2,2,4-trimethylocta-4,6-dienoic acid. The HR-PKS ltbA produces the trimethylated polyketide chain from acetyl-CoA, malonyl-CoA and S-adenosylmethionine (SAM), and the ltbA cAT domain then uses glucinol produced by the glycosyltransferase ltbB as an offloading substrate to release luteodienoside A. Since ltbA and ltbB are sufficient for the biosynthesis of luteodienoside A, the functions of the methyltransferase ltbC and the FAD-binding monooxygenase ltbD within the pathway remain obscur. The sequence is that of Probable FAD-binding monooxygenase ltbD from Aspergillus luteorubrus.